A 131-amino-acid polypeptide reads, in one-letter code: UPF0102 protein YraN (131 aa).

Polar residues predominate over residues Met1–Thr19. A disordered region spans residues Met1–Gly20.

This sequence belongs to the UPF0102 family.

The polypeptide is UPF0102 protein YraN (Escherichia coli O17:K52:H18 (strain UMN026 / ExPEC)).